Consider the following 573-residue polypeptide: MARAVGPERRLLAVYTGGTIGMRSELGVLVPGTGLAAILRTLPMFHDEEHARARGLSEDTLVLPPASRNQRILYTVLECQPLFDSSDMTIAEWVCLAQTIKRHYEQYHGFVVIHGTDTMAFAASMLSFMLENLQKTVILTGAQVPIHALWSDGRENLLGALLMAGQYVIPEVCLFFQNQLFRGNRATKVDARRFAAFCSPNLLPLATVGADITINRELVRKVDGKAGLVVHSSMEQDVGLLRLYPGIPAALVRAFLQPPLKGVVMETFGSGNGPTKPDLLQELRVATERGLVIVNCTHCLQGAVTTDYAAGMAMAGAGVISGFDMTSEAALAKLSYVLGQPGLSLDVRKELLTKDLRGEMTPPSVEERRPSLQGNTLGGGVSWLLSLSGSQEADALRNALVPSLACAAAHAGDVEALQALVELGSDLGLVDFNGQTPLHAAARGGHTEAVTMLLQRGVDVNTRDTDGFSPLLLAVRGRHPGVIGLLREAGASLSTQELEEAGTELCRLAYRADLEGLQVWWQAGADLGQPGYDGHSALHVAEAAGNLAVVAFLQSLEGAVGAQAPCPEVLPGV.

Positions 9–355 (RRLLAVYTGG…DVRKELLTKD (347 aa)) constitute an Asparaginase/glutaminase domain. T19 acts as the Acyl-ester intermediate in catalysis. An asparaginase region spans residues 41-350 (TLPMFHDEEH…PGLSLDVRKE (310 aa)). Residues 84-86 (DSS) and 116-117 (TD) each bind substrate. 5 ANK repeats span residues 141–170 (GAQV…YVIP), 399–429 (ALVP…DLGL), 433–462 (NGQT…DVNT), 466–495 (DGFS…SLST), and 533–562 (DGHS…AVGA).

This sequence in the N-terminal section; belongs to the asparaginase 1 family. As to quaternary structure, monomer.

The enzyme catalyses a 1-acyl-sn-glycero-3-phosphocholine + H2O = sn-glycerol 3-phosphocholine + a fatty acid + H(+). It catalyses the reaction L-asparagine + H2O = L-aspartate + NH4(+). It carries out the reaction a 1-O-alkyl-2-acetyl-sn-glycero-3-phosphocholine + H2O = a 1-O-alkyl-sn-glycero-3-phosphocholine + acetate + H(+). The catalysed reaction is 1-hexadecanoyl-sn-glycero-3-phosphocholine + H2O = sn-glycerol 3-phosphocholine + hexadecanoate + H(+). The enzyme catalyses 2 1-hexadecanoyl-sn-glycero-3-phosphocholine = 1,2-dihexadecanoyl-sn-glycero-3-phosphocholine + sn-glycerol 3-phosphocholine. It catalyses the reaction 1-octadecanoyl-sn-glycero-3-phosphocholine + H2O = octadecanoate + sn-glycerol 3-phosphocholine + H(+). It carries out the reaction 1-(9Z-octadecenoyl)-sn-glycero-3-phosphocholine + H2O = sn-glycerol 3-phosphocholine + (9Z)-octadecenoate + H(+). The catalysed reaction is 1-hexadecanoyl-sn-glycero-3-phosphoethanolamine + H2O = sn-glycero-3-phosphoethanolamine + hexadecanoate + H(+). The enzyme catalyses 1-(9Z-octadecenoyl)-sn-glycero-3-phosphoethanolamine + H2O = sn-glycero-3-phosphoethanolamine + (9Z)-octadecenoate + H(+). It catalyses the reaction 1-hexadecanoyl-sn-glycero-3-phosphoethanolamine + 1-hexadecanoyl-sn-glycero-3-phosphocholine = 1,2-dihexadecanoyl-sn-glycero-3-phosphoethanolamine + sn-glycerol 3-phosphocholine. It carries out the reaction 2-(5Z,8Z,11Z,14Z)-eicosatetraenoyl-sn-glycero-3-phosphocholine + H2O = sn-glycerol 3-phosphocholine + (5Z,8Z,11Z,14Z)-eicosatetraenoate + H(+). The catalysed reaction is 2-hexadecanoyl-sn-glycero-3-phosphocholine + H2O = sn-glycerol 3-phosphocholine + hexadecanoate + H(+). The enzyme catalyses 2 2-hexadecanoyl-sn-glycero-3-phosphocholine = 1,2-dihexadecanoyl-sn-glycero-3-phosphocholine + sn-glycerol 3-phosphocholine. It catalyses the reaction 1-O-(9Z)-octadecenoyl-2-O-acetyl-sn-glycero-3-phosphocholine + H2O = 2-acetyl-sn-glycero-3-phosphocholine + (9Z)-octadecenoate + H(+). It carries out the reaction a 1-acyl-sn-glycero-3-phospho-(1D-myo-inositol) + 1-hexadecanoyl-sn-glycero-3-phosphocholine = a 1-acyl-2-hexadecanoyl-sn-glycero-3-phospho-(1D-myo-inositol) + sn-glycerol 3-phosphocholine. The catalysed reaction is 2 2-(5Z,8Z,11Z,14Z)-eicosatetraenoyl-sn-glycero-3-phosphocholine = 1,2-di-(5Z,8Z,11Z,14Z-eicosatetraenoyl)-sn-glycero-3-phosphocholine + sn-glycerol 3-phosphocholine. In terms of biological role, exhibits lysophospholipase, transacylase, PAF acetylhydrolase and asparaginase activities. Can catalyze three types of transacylation reactions: (1) acyl transfer from 1-acyl-sn-glycero-3-phosphocholine (1-acyl-GPC) to the sn-1(3) positions of glycerol and 2-acylglycerol (sn-1 to -1(3) transfer), (2) acyl transfer from 1-acyl-GPC to the sn-2 positions of 1-acyl-GPC, 1-acyl-sn-glycero-3-phosphoethanolamine (1-acyl-GPE), and other lysophospholipids (sn-1 to -2 transfer) and (3) acyl transfer from 2-acyl-GPC to the sn-1 position of 2-acyl-GPC and 2-acyl-GPE (sn-2 to -1 transfer). Mediates the synthesis of 1-arachidonoyl species of phospholipids by transferring the arachidonoyl residue from 2-arachidonoyl lysophospholipid to the sn-1 position of 2-acyl lysophospholipid. The protein is 60 kDa lysophospholipase (ASPG) of Homo sapiens (Human).